Reading from the N-terminus, the 85-residue chain is uncharacterized protein (85 aa).

The chain crosses the membrane as a helical span at residues 39–59 (FILFEISMYIIFIVTFCYKII).

It is found in the host membrane. This is an uncharacterized protein from Gallid herpesvirus 2 (strain Chicken/Md5/ATCC VR-987) (GaHV-2).